Here is a 518-residue protein sequence, read N- to C-terminus: Probable thiamine biosynthetic bifunctional enzyme (518 aa).

The segment at 1–229 is thiamine-phosphate synthase; sequence MKRQIDYSLY…ATPPCFAQAR (229 aa). 4-amino-2-methyl-5-(diphosphooxymethyl)pyrimidine-binding positions include 40-44 and asparagine 72; that span reads QHREK. Mg(2+) contacts are provided by aspartate 73 and aspartate 92. 4-amino-2-methyl-5-(diphosphooxymethyl)pyrimidine is bound at residue serine 111. Position 137-139 (137-139) interacts with 2-[(2R,5Z)-2-carboxy-4-methylthiazol-5(2H)-ylidene]ethyl phosphate; the sequence is TNT. Lysine 140 serves as a coordination point for 4-amino-2-methyl-5-(diphosphooxymethyl)pyrimidine. 2-[(2R,5Z)-2-carboxy-4-methylthiazol-5(2H)-ylidene]ethyl phosphate is bound by residues glycine 173 and 199–200; that span reads VS. The segment at 230–518 is hydroxyethylthiazole kinase; it reads SSLTTPKDLL…IERAKLEKAE (289 aa). Methionine 281 serves as a coordination point for 5-(2-hydroxyethyl)-4-methylthiazole. ATP is bound by residues lysine 355 and serine 403. 5-(2-hydroxyethyl)-4-methylthiazole is bound at residue alanine 430. The active-site Proton acceptor; for hydroxyethylthiazole kinase activity is the cysteine 433.

The protein in the N-terminal section; belongs to the thiamine-phosphate synthase family. This sequence in the C-terminal section; belongs to the Thz kinase family. The cofactor is Mg(2+).

The catalysed reaction is 2-[(2R,5Z)-2-carboxy-4-methylthiazol-5(2H)-ylidene]ethyl phosphate + 4-amino-2-methyl-5-(diphosphooxymethyl)pyrimidine + 2 H(+) = thiamine phosphate + CO2 + diphosphate. It catalyses the reaction 2-(2-carboxy-4-methylthiazol-5-yl)ethyl phosphate + 4-amino-2-methyl-5-(diphosphooxymethyl)pyrimidine + 2 H(+) = thiamine phosphate + CO2 + diphosphate. It carries out the reaction 4-methyl-5-(2-phosphooxyethyl)-thiazole + 4-amino-2-methyl-5-(diphosphooxymethyl)pyrimidine + H(+) = thiamine phosphate + diphosphate. The enzyme catalyses 5-(2-hydroxyethyl)-4-methylthiazole + ATP = 4-methyl-5-(2-phosphooxyethyl)-thiazole + ADP + H(+). Its pathway is cofactor biosynthesis; thiamine diphosphate biosynthesis; 4-methyl-5-(2-phosphoethyl)-thiazole from 5-(2-hydroxyethyl)-4-methylthiazole: step 1/1. It participates in cofactor biosynthesis; thiamine diphosphate biosynthesis; thiamine phosphate from 4-amino-2-methyl-5-diphosphomethylpyrimidine and 4-methyl-5-(2-phosphoethyl)-thiazole: step 1/1. Functionally, condenses 4-methyl-5-(beta-hydroxyethyl)thiazole monophosphate (THZ-P) and 2-methyl-4-amino-5-hydroxymethyl pyrimidine pyrophosphate (HMP-PP) to form thiamine monophosphate (TMP). In Schizosaccharomyces pombe (strain 972 / ATCC 24843) (Fission yeast), this protein is Probable thiamine biosynthetic bifunctional enzyme (thi4).